The following is a 395-amino-acid chain: ATP-dependent RNA helicase eIF4A (395 aa).

Ser2 is modified (N-acetylserine). The Q motif motif lies at 22 to 50; that stretch reads YKFDDMELDENLLRGVFGYGFEEPSAIQQ. The 170-residue stretch at 53 to 222 folds into the Helicase ATP-binding domain; it reads IMPIIEGHDV…TKFMRNPVRI (170 aa). Residue 66–73 coordinates ATP; it reads AQSGTGKT. Thr73 is subject to Phosphothreonine. Phosphoserine occurs at positions 77 and 129. Thr146 is modified (phosphothreonine). Positions 170 to 173 match the DEAD box motif; it reads DEAD. One can recognise a Helicase C-terminal domain in the interval 233 to 394; sequence GIKQFYVNVE…ELPSDIATLL (162 aa).

Belongs to the DEAD box helicase family. eIF4A subfamily. Component of the eIF4F complex, which composition varies with external and internal environmental conditions. It is composed of at least eIF4A, eIF4E and eIF4G.

It localises to the cytoplasm. The catalysed reaction is ATP + H2O = ADP + phosphate + H(+). In terms of biological role, ATP-dependent RNA helicase which is a subunit of the eIF4F complex involved in cap recognition and is required for mRNA binding to ribosome. In the current model of translation initiation, eIF4A unwinds RNA secondary structures in the 5'-UTR of mRNAs which is necessary to allow efficient binding of the small ribosomal subunit, and subsequent scanning for the initiator codon. The polypeptide is ATP-dependent RNA helicase eIF4A (TIF1) (Saccharomyces cerevisiae (strain YJM789) (Baker's yeast)).